The chain runs to 260 residues: Adenosylcobinamide-GDP ribazoletransferase (260 aa).

The next 7 membrane-spanning stretches (helical) occupy residues 42–62 (TWAL…VYKI), 68–88 (LTPN…TGAL), 118–137 (IGTY…WSAL), 144–166 (WLVT…AFMS), 180–200 (AGAP…LVLT), 201–221 (LALG…AGLI), and 237–257 (ILGA…AAFQ).

This sequence belongs to the CobS family. Mg(2+) is required as a cofactor.

Its subcellular location is the cell inner membrane. The enzyme catalyses alpha-ribazole + adenosylcob(III)inamide-GDP = adenosylcob(III)alamin + GMP + H(+). The catalysed reaction is alpha-ribazole 5'-phosphate + adenosylcob(III)inamide-GDP = adenosylcob(III)alamin 5'-phosphate + GMP + H(+). It participates in cofactor biosynthesis; adenosylcobalamin biosynthesis; adenosylcobalamin from cob(II)yrinate a,c-diamide: step 7/7. In terms of biological role, joins adenosylcobinamide-GDP and alpha-ribazole to generate adenosylcobalamin (Ado-cobalamin). Also synthesizes adenosylcobalamin 5'-phosphate from adenosylcobinamide-GDP and alpha-ribazole 5'-phosphate. This is Adenosylcobinamide-GDP ribazoletransferase from Bradyrhizobium diazoefficiens (strain JCM 10833 / BCRC 13528 / IAM 13628 / NBRC 14792 / USDA 110).